We begin with the raw amino-acid sequence, 85 residues long: Large ribosomal subunit protein bL31B (85 aa).

It belongs to the bacterial ribosomal protein bL31 family. Type B subfamily. In terms of assembly, part of the 50S ribosomal subunit.

This chain is Large ribosomal subunit protein bL31B, found in Porphyromonas gingivalis (strain ATCC 33277 / DSM 20709 / CIP 103683 / JCM 12257 / NCTC 11834 / 2561).